We begin with the raw amino-acid sequence, 311 residues long: Olfactory receptor 4S2 (311 aa).

At 1-23 the chain is on the extracellular side; that stretch reads MEKINNVTEFIFWGLSQSPEIEK. A glycan (N-linked (GlcNAc...) asparagine) is linked at asparagine 6. The helical transmembrane segment at 24 to 47 threads the bilayer; sequence VCFVVFSFFYIIILLGNLLIMLTV. At 48-55 the chain is on the cytoplasmic side; sequence CLSNLFKS. The helical transmembrane segment at 56 to 77 threads the bilayer; it reads PMYFFLSFLSFVDICYSSVTAP. The Extracellular segment spans residues 78–98; sequence KMIVDLLAKDKTISYVGCMLQ. Residues cysteine 95 and cysteine 187 are joined by a disulfide bond. Residues 99 to 118 traverse the membrane as a helical segment; sequence LFGVHFFGCTEIFILTVMAY. The Cytoplasmic segment spans residues 119–137; sequence DRYVAICKPLHYMTIMNRE. The chain crosses the membrane as a helical span at residues 138 to 156; that stretch reads TCNKMLLGTWVGGFLHSII. The Extracellular portion of the chain corresponds to 157–193; the sequence is QVALVVQLPFCGPNEIDHYFCDVHPVLKLACTETYIV. The helical transmembrane segment at 194-217 threads the bilayer; that stretch reads GVVVTANSGTIALGSFVILLISYS. The Cytoplasmic portion of the chain corresponds to 218 to 233; that stretch reads IILVSLRKQSAEGRRK. Residues 234-256 form a helical membrane-spanning segment; that stretch reads ALSTCGSHIAMVVIFFGPCTFMY. Residues 257–267 lie on the Extracellular side of the membrane; the sequence is MRPDTTFSEDK. Residues 268 to 287 traverse the membrane as a helical segment; sequence MVAVFYTIITPMLNPLIYTL. Residues 288-311 lie on the Cytoplasmic side of the membrane; it reads RNAEVKNAMKKLWGRNVFLEAKGK.

Belongs to the G-protein coupled receptor 1 family.

The protein resides in the cell membrane. Functionally, odorant receptor. This chain is Olfactory receptor 4S2 (OR4S2), found in Homo sapiens (Human).